Reading from the N-terminus, the 207-residue chain is Thiamine-phosphate synthase (207 aa).

4-amino-2-methyl-5-(diphosphooxymethyl)pyrimidine contacts are provided by residues 37 to 41 (QLREK) and Asn-69. 2 residues coordinate Mg(2+): Asp-70 and Asp-89. Ser-108 contacts 4-amino-2-methyl-5-(diphosphooxymethyl)pyrimidine. 134–136 (TGS) serves as a coordination point for 2-[(2R,5Z)-2-carboxy-4-methylthiazol-5(2H)-ylidene]ethyl phosphate. Position 137 (Lys-137) interacts with 4-amino-2-methyl-5-(diphosphooxymethyl)pyrimidine. 2-[(2R,5Z)-2-carboxy-4-methylthiazol-5(2H)-ylidene]ethyl phosphate is bound by residues Gly-165 and 185–186 (IS).

It belongs to the thiamine-phosphate synthase family. Requires Mg(2+) as cofactor.

The catalysed reaction is 2-[(2R,5Z)-2-carboxy-4-methylthiazol-5(2H)-ylidene]ethyl phosphate + 4-amino-2-methyl-5-(diphosphooxymethyl)pyrimidine + 2 H(+) = thiamine phosphate + CO2 + diphosphate. The enzyme catalyses 2-(2-carboxy-4-methylthiazol-5-yl)ethyl phosphate + 4-amino-2-methyl-5-(diphosphooxymethyl)pyrimidine + 2 H(+) = thiamine phosphate + CO2 + diphosphate. It carries out the reaction 4-methyl-5-(2-phosphooxyethyl)-thiazole + 4-amino-2-methyl-5-(diphosphooxymethyl)pyrimidine + H(+) = thiamine phosphate + diphosphate. Its pathway is cofactor biosynthesis; thiamine diphosphate biosynthesis; thiamine phosphate from 4-amino-2-methyl-5-diphosphomethylpyrimidine and 4-methyl-5-(2-phosphoethyl)-thiazole: step 1/1. Functionally, condenses 4-methyl-5-(beta-hydroxyethyl)thiazole monophosphate (THZ-P) and 2-methyl-4-amino-5-hydroxymethyl pyrimidine pyrophosphate (HMP-PP) to form thiamine monophosphate (TMP). The polypeptide is Thiamine-phosphate synthase (Desulfitobacterium hafniense (strain DSM 10664 / DCB-2)).